The primary structure comprises 335 residues: Glycerol-3-phosphate dehydrogenase [NAD(P)+] (335 aa).

Serine 12, tryptophan 13, and lysine 107 together coordinate NADPH. The sn-glycerol 3-phosphate site is built by lysine 107, glycine 138, and serine 140. NADPH is bound at residue alanine 142. Sn-glycerol 3-phosphate is bound by residues lysine 193, aspartate 246, serine 256, arginine 257, and asparagine 258. Lysine 193 (proton acceptor) is an active-site residue. Arginine 257 provides a ligand contact to NADPH. The NADPH site is built by valine 281 and glutamate 283.

This sequence belongs to the NAD-dependent glycerol-3-phosphate dehydrogenase family.

It localises to the cytoplasm. It carries out the reaction sn-glycerol 3-phosphate + NAD(+) = dihydroxyacetone phosphate + NADH + H(+). The enzyme catalyses sn-glycerol 3-phosphate + NADP(+) = dihydroxyacetone phosphate + NADPH + H(+). Its pathway is membrane lipid metabolism; glycerophospholipid metabolism. In terms of biological role, catalyzes the reduction of the glycolytic intermediate dihydroxyacetone phosphate (DHAP) to sn-glycerol 3-phosphate (G3P), the key precursor for phospholipid synthesis. The chain is Glycerol-3-phosphate dehydrogenase [NAD(P)+] from Geobacter metallireducens (strain ATCC 53774 / DSM 7210 / GS-15).